The chain runs to 63 residues: Potassium channel toxin MeuTXKalpha4 (63 aa).

The N-terminal stretch at 1–28 (MSRLLIFILTAVVLSVIIDILNNSKVEG) is a signal peptide. Cystine bridges form between Cys35/Cys53, Cys39/Cys59, and Cys43/Cys61.

This sequence belongs to the short scorpion toxin superfamily. Potassium channel inhibitor family. In terms of tissue distribution, expressed by the venom gland.

The protein resides in the secreted. May block voltage-gated potassium channels (Kv). The protein is Potassium channel toxin MeuTXKalpha4 of Mesobuthus eupeus (Lesser Asian scorpion).